Reading from the N-terminus, the 88-residue chain is PTS system cellobiose-specific EIIB component (88 aa).

Positions 3–88 (KKRIYLFCSA…IDTLLYGKVD (86 aa)) constitute a PTS EIIB type-3 domain. Cys-10 (phosphocysteine intermediate) is an active-site residue. Phosphocysteine; by EIIA is present on Cys-10.

Its subcellular location is the cytoplasm. It catalyses the reaction D-cellobiose(out) + N(pros)-phospho-L-histidyl-[protein] = 6-phospho-beta-D-glucosyl-(1-&gt;4)-D-glucose(in) + L-histidyl-[protein]. In terms of biological role, the phosphoenolpyruvate-dependent sugar phosphotransferase system (sugar PTS), a major carbohydrate active transport system, catalyzes the phosphorylation of incoming sugar substrates concomitantly with their translocation across the cell membrane. The enzyme II CelABD PTS system is involved in cellobiose transport. The chain is PTS system cellobiose-specific EIIB component from Aeromonas hydrophila.